The sequence spans 381 residues: Cytochrome b (381 aa).

The next 4 helical transmembrane spans lie at 34–54 (FGSL…FLAM), 78–99 (WLIR…YLHI), 114–134 (WNIG…GYVL), and 179–199 (FFAF…IHLL). Histidine 84 and histidine 98 together coordinate heme b. Residues histidine 183 and histidine 197 each coordinate heme b. Histidine 202 contributes to the a ubiquinone binding site. A run of 4 helical transmembrane segments spans residues 227–247 (YKDL…ALFM), 289–309 (LGGV…PLLH), 321–341 (MTQI…WIGG), and 348–368 (FMMV…IIMP).

This sequence belongs to the cytochrome b family. In terms of assembly, the cytochrome bc1 complex contains 3 respiratory subunits (MT-CYB, CYC1 and UQCRFS1), 2 core proteins (UQCRC1 and UQCRC2) and probably 6 low-molecular weight proteins. The cofactor is heme b.

The protein resides in the mitochondrion inner membrane. Its function is as follows. Component of the ubiquinol-cytochrome c reductase complex (complex III or cytochrome b-c1 complex) that is part of the mitochondrial respiratory chain. The b-c1 complex mediates electron transfer from ubiquinol to cytochrome c. Contributes to the generation of a proton gradient across the mitochondrial membrane that is then used for ATP synthesis. The sequence is that of Cytochrome b (mt-cyb) from Prionace glauca (Blue shark).